Reading from the N-terminus, the 387-residue chain is Exodeoxyribonuclease 7 large subunit (387 aa).

The protein belongs to the XseA family. As to quaternary structure, heterooligomer composed of large and small subunits.

It localises to the cytoplasm. The enzyme catalyses Exonucleolytic cleavage in either 5'- to 3'- or 3'- to 5'-direction to yield nucleoside 5'-phosphates.. Bidirectionally degrades single-stranded DNA into large acid-insoluble oligonucleotides, which are then degraded further into small acid-soluble oligonucleotides. The chain is Exodeoxyribonuclease 7 large subunit from Synechococcus sp. (strain CC9902).